Consider the following 534-residue polypeptide: MKKKISQAIIKFFKNENLIIDESKLIIEKSKNFGDYSSNVALIFAKQNKIDSLKLAQTIKNQLLSENLNLEKIEIAPPGFINFFISKNEYANIVSEIIQKGENFGRYSLQKKINLEFVSANPTGFLHLGHLRGAVIGDILANILEFSGNFVFREYYINDFGSQIDRLVGSVFSRYQQIFKKFALPEEAYLGEDIIWCAQKFFQIYANKFENSSLDDLETYKIFREKSIEIFLDEIKADLANLSIKFDVFSSESELFRTEKVQKNLANLPFVYKKEEAIWLKTSKFGDQKDRVLVKKNGEFTYFSSDIAYHFEKINSNFKPDFLINIWGADHIGYVDRMKAALKTVNLNQKLDILLYQLVKLFKNGQEFKMSKRMGKTFTIKDLLELVDQDAIRYFISERSYNSLVEFDIGLAAKISLQNPLFLIQYAHARASKLLANSTIVPEKILKFEAENETILISKLKQFEEIVLKITKNYKINLLNKYLLELANLFNSFYSNSKIIGNQNQNSLLSLTKAVQIVLKNGLKLLGIKAKERI.

The 'HIGH' region motif lies at 120 to 130 (ANPTGFLHLGH).

This sequence belongs to the class-I aminoacyl-tRNA synthetase family. In terms of assembly, monomer.

The protein resides in the cytoplasm. It carries out the reaction tRNA(Arg) + L-arginine + ATP = L-arginyl-tRNA(Arg) + AMP + diphosphate. The sequence is that of Arginine--tRNA ligase from Mesomycoplasma hyopneumoniae (strain J / ATCC 25934 / NCTC 10110) (Mycoplasma hyopneumoniae).